A 289-amino-acid polypeptide reads, in one-letter code: DNA repair protein rad14 (289 aa).

Residues cysteine 116, cysteine 119, cysteine 137, and cysteine 140 each contribute to the Zn(2+) site. The segment at 116-140 is a zinc-finger region; sequence CFECDSIELDTKYFDIFHCRVCHTC.

The protein belongs to the XPA family. As to quaternary structure, interacts with hrq1.

It localises to the nucleus. Its function is as follows. Involved in nucleotide excision repair (NER). Functional in repair of ultraviolet radiation induced damages and in mitotic mutation avoidance. Binds damaged DNA. Binds specifically to base-base mismatches or small insertion/deletion loops with unpaired nucleotides. Maintains GT repeat stability. Functions as a part of the short-patch excision repair system. The protein is DNA repair protein rad14 of Schizosaccharomyces pombe (strain 972 / ATCC 24843) (Fission yeast).